The sequence spans 222 residues: MMSLRIYYGGTFDPVHLGHLAIARAARDELQVAVRMLPAADPPHRAVPGATADQRFTMLSLAIGDEPGLLLDHRELDRAIRFPGRPSYTVDTLRELRGELGPSRPLAWLVGADSLLGLTRWHEWEALFGLAHFVVAERPGSPLQASVDGELGRALEGRWADNEQALFASPAGRILRLHHPLREESASAVRAQIAAGGPWRALLPPAVADYVAAHGLYRSPTP.

It belongs to the NadD family.

It catalyses the reaction nicotinate beta-D-ribonucleotide + ATP + H(+) = deamido-NAD(+) + diphosphate. It participates in cofactor biosynthesis; NAD(+) biosynthesis; deamido-NAD(+) from nicotinate D-ribonucleotide: step 1/1. Its function is as follows. Catalyzes the reversible adenylation of nicotinate mononucleotide (NaMN) to nicotinic acid adenine dinucleotide (NaAD). The chain is Probable nicotinate-nucleotide adenylyltransferase from Stenotrophomonas maltophilia (strain K279a).